A 337-amino-acid polypeptide reads, in one-letter code: Glyceraldehyde-3-phosphate dehydrogenase 1, cytosolic (337 aa).

NAD(+) is bound by residues 13–14 (RI), Asp35, and Arg82. D-glyceraldehyde 3-phosphate is bound by residues 153-155 (SCT), Thr184, 213-214 (TG), and Arg236. Cys154 acts as the Nucleophile in catalysis. Residue Asn318 participates in NAD(+) binding.

This sequence belongs to the glyceraldehyde-3-phosphate dehydrogenase family. In terms of assembly, homotetramer. Phosphorylated after gibberellin treatment.

It is found in the cytoplasm. It catalyses the reaction D-glyceraldehyde 3-phosphate + phosphate + NAD(+) = (2R)-3-phospho-glyceroyl phosphate + NADH + H(+). It participates in carbohydrate degradation; glycolysis; pyruvate from D-glyceraldehyde 3-phosphate: step 1/5. Key enzyme in glycolysis that catalyzes the first step of the pathway by converting D-glyceraldehyde 3-phosphate (G3P) into 3-phospho-D-glyceroyl phosphate. Essential for the maintenance of cellular ATP levels and carbohydrate metabolism. This chain is Glyceraldehyde-3-phosphate dehydrogenase 1, cytosolic (GAPC1), found in Oryza sativa subsp. japonica (Rice).